The sequence spans 573 residues: AP-4 complex accessory subunit Tepsin (573 aa).

Positions 8–141 (RDRLSFLHRL…FSDAVPQPPS (134 aa)) constitute an ENTH domain. Disordered stretches follow at residues 136 to 155 (VPQP…MGAQ) and 194 to 311 (NAVR…NDCQ). The span at 137–150 (PQPPSQPPQIPPPA) shows a compositional bias: pro residues. The span at 217–229 (PAVTPSASHTHPN) shows a compositional bias: polar residues. Residues 260 to 293 (SSPSSQNSSCTSNLSRASDSGSRSGSDSHSGTSR) show a composition bias toward low complexity. Residues 294–303 (EPGDLAERAE) are compositionally biased toward basic and acidic residues. The residue at position 400 (S400) is a Phosphoserine. A disordered region spans residues 497–526 (CSSEQGTESEQRLENTDTPEDSSSPLPWSP). Positions 526–536 (PNSLFAGMELV) are interaction with AP4B1. Residues 563–573 (SEPSAFAFLNM) are interaction with AP4E1.

Interacts with AP4B1 and AP4E1; the interaction is direct and mediates the association of TEPSIN with the adapter-like complex 4 (AP-4), a heterotetramer composed of AP4B1, AP4E1, AP4M1 and AP4S1.

It is found in the golgi apparatus. The protein localises to the trans-Golgi network membrane. Its subcellular location is the cytoplasmic vesicle. It localises to the cytoplasm. The protein resides in the cytosol. Functionally, associates with the adapter-like complex 4 (AP-4) and may therefore play a role in vesicular trafficking of proteins at the trans-Golgi network. The polypeptide is AP-4 complex accessory subunit Tepsin (Mus musculus (Mouse)).